Consider the following 293-residue polypeptide: Ribosomal protein L11 methyltransferase (293 aa).

Positions 145, 166, 188, and 230 each coordinate S-adenosyl-L-methionine.

It belongs to the methyltransferase superfamily. PrmA family.

The protein localises to the cytoplasm. It carries out the reaction L-lysyl-[protein] + 3 S-adenosyl-L-methionine = N(6),N(6),N(6)-trimethyl-L-lysyl-[protein] + 3 S-adenosyl-L-homocysteine + 3 H(+). In terms of biological role, methylates ribosomal protein L11. The chain is Ribosomal protein L11 methyltransferase from Shewanella sediminis (strain HAW-EB3).